Consider the following 217-residue polypeptide: Transmembrane protein 247 (217 aa).

Basic and acidic residues predominate over residues M1–E10. The interval M1–G87 is disordered. Residues R109 to T154 are a coiled coil. 2 consecutive transmembrane segments (helical) span residues L165 to I185 and I192 to I212.

It is found in the membrane. This chain is Transmembrane protein 247, found in Bos taurus (Bovine).